Reading from the N-terminus, the 904-residue chain is Envelope glycoprotein B (904 aa).

A signal peptide spans 1–30; it reads MHQGAPSWGRRWFVVWALLGLTLGVLVASA. At 31–774 the chain is on the virion surface side; that stretch reads APTSPGTPGV…SGVSSFMSNP (744 aa). Low complexity predominate over residues 32-52; that stretch reads PTSPGTPGVAAATQAANGGPA. The interval 32-88 is disordered; sequence PTSPGTPGVAAATQAANGGPATPAPPPLGAAPTGDPKPKKNKKPKNPTPPRPAGDNA. N-linked (GlcNAc...) asparagine; by host glycosylation is found at asparagine 87 and asparagine 141. Disulfide bonds link cysteine 116/cysteine 573, cysteine 133/cysteine 529, cysteine 207/cysteine 271, cysteine 364/cysteine 412, and cysteine 596/cysteine 633. Involved in fusion and/or binding to host membrane stretches follow at residues 173–179 and 258–265; these read VWFGHRY and RVEAFHRY. Residues asparagine 398 and asparagine 430 are each glycosylated (N-linked (GlcNAc...) asparagine; by host). The interval 470-492 is disordered; the sequence is REQSRKPPNPTPPPPGASANASV. The segment covering 476–485 has biased composition (pro residues); that stretch reads PPNPTPPPPG. N-linked (GlcNAc...) asparagine; by host glycosylation occurs at asparagine 489. Asparagine 674 carries an N-linked (GlcNAc...) asparagine; by host glycan. The hydrophobic membrane proximal region stretch occupies residues 719–772; sequence IDTVIHADANAAMFAGLGAFFEGMGDLGRAVGKVVMGIVGGVVSAVSGVSSFMS. The chain crosses the membrane as a helical span at residues 775–795; sequence FGALAVGLLVLAGLAAAFFAF. Topologically, residues 796–904 are intravirion; that stretch reads RYVMRLQSNP…KDGDADEDDL (109 aa). Positions 849-852 match the Golgi targeting motif; that stretch reads YMAL. Residues 883 to 904 form a disordered region; sequence KRRNTNYTQVPNKDGDADEDDL. Phosphothreonine; by host is present on threonine 887. An Internalization motif motif is present at residues 889–892; that stretch reads YTQV.

The protein belongs to the herpesviridae glycoprotein B family. As to quaternary structure, homotrimer; disulfide-linked. Interacts with host receptor MYH9/NMMHC-IIA. Interacts with host receptor MYH10/NMMHC-IIB. Binds to heparan sulfate proteoglycans. Interacts with gH/gL heterodimer. Interacts with the host coreceptor PILRA. Post-translationally, the cytoplasmic tail is phosphorylated by the viral kinase US3. Phosphorylation may be linked to a down-regulation of gB expression on cell surface. Ubiquitinated.

The protein localises to the virion membrane. The protein resides in the host cell membrane. Its subcellular location is the host endosome membrane. It localises to the host Golgi apparatus membrane. Functionally, envelope glycoprotein that forms spikes at the surface of virion envelope and binds to the host cell entry receptors MYH9/NMMHC-IIA and MYH10/NMMHC-IIB, promoting the virus entry into host cells. Essential for the initial attachment to heparan sulfate moieties of the host cell surface proteoglycans. Involved in fusion of viral and cellular membranes leading to virus entry into the host cell: following initial binding to its host cell entry receptors, membrane fusion is mediated by the fusion machinery composed at least of gB and the heterodimer gH/gL. May be involved in the fusion between the virion envelope and the outer nuclear membrane during virion egress. Also plays a role, together with gK, in virus-induced cell-to-cell fusion (syncytia formation). The sequence is that of Envelope glycoprotein B from Human herpesvirus 1 (strain KOS) (HHV-1).